The chain runs to 310 residues: Aspartate carbamoyltransferase catalytic subunit (310 aa).

Residues R58 and T59 each contribute to the carbamoyl phosphate site. K86 contacts L-aspartate. R108, H136, and Q139 together coordinate carbamoyl phosphate. 2 residues coordinate L-aspartate: R169 and R224. Residues G265 and P266 each contribute to the carbamoyl phosphate site.

This sequence belongs to the aspartate/ornithine carbamoyltransferase superfamily. ATCase family. In terms of assembly, heterododecamer (2C3:3R2) of six catalytic PyrB chains organized as two trimers (C3), and six regulatory PyrI chains organized as three dimers (R2).

It carries out the reaction carbamoyl phosphate + L-aspartate = N-carbamoyl-L-aspartate + phosphate + H(+). It functions in the pathway pyrimidine metabolism; UMP biosynthesis via de novo pathway; (S)-dihydroorotate from bicarbonate: step 2/3. In terms of biological role, catalyzes the condensation of carbamoyl phosphate and aspartate to form carbamoyl aspartate and inorganic phosphate, the committed step in the de novo pyrimidine nucleotide biosynthesis pathway. The polypeptide is Aspartate carbamoyltransferase catalytic subunit (Trichlorobacter lovleyi (strain ATCC BAA-1151 / DSM 17278 / SZ) (Geobacter lovleyi)).